Reading from the N-terminus, the 142-residue chain is Large ribosomal subunit protein uL11 (142 aa).

This sequence belongs to the universal ribosomal protein uL11 family. As to quaternary structure, part of the ribosomal stalk of the 50S ribosomal subunit. Interacts with L10 and the large rRNA to form the base of the stalk. L10 forms an elongated spine to which L12 dimers bind in a sequential fashion forming a multimeric L10(L12)X complex. One or more lysine residues are methylated.

Functionally, forms part of the ribosomal stalk which helps the ribosome interact with GTP-bound translation factors. This Mycobacterium sp. (strain MCS) protein is Large ribosomal subunit protein uL11.